Consider the following 434-residue polypeptide: Methylenetetrahydrofolate--tRNA-(uracil-5-)-methyltransferase TrmFO (434 aa).

9-14 contacts FAD; it reads GGGLAG.

The protein belongs to the MnmG family. TrmFO subfamily. FAD serves as cofactor.

It is found in the cytoplasm. The enzyme catalyses uridine(54) in tRNA + (6R)-5,10-methylene-5,6,7,8-tetrahydrofolate + NADH + H(+) = 5-methyluridine(54) in tRNA + (6S)-5,6,7,8-tetrahydrofolate + NAD(+). It carries out the reaction uridine(54) in tRNA + (6R)-5,10-methylene-5,6,7,8-tetrahydrofolate + NADPH + H(+) = 5-methyluridine(54) in tRNA + (6S)-5,6,7,8-tetrahydrofolate + NADP(+). Its function is as follows. Catalyzes the folate-dependent formation of 5-methyl-uridine at position 54 (M-5-U54) in all tRNAs. The sequence is that of Methylenetetrahydrofolate--tRNA-(uracil-5-)-methyltransferase TrmFO from Geobacter sulfurreducens (strain ATCC 51573 / DSM 12127 / PCA).